The primary structure comprises 712 residues: Sterol uptake control protein 2 (712 aa).

The span at 1–19 (MMMTVKQESPNSTLNTSEF) shows a compositional bias: polar residues. The tract at residues 1 to 52 (MMMTVKQESPNSTLNTSEFSSDENLKTNNSEPPKKVSKSSTGKRKYHQKSRN) is disordered. Basic residues predominate over residues 35–50 (KVSKSSTGKRKYHQKS). The zn(2)-C6 fungal-type DNA-binding region spans 54-81 (CSTCKKRRVKCDEQRPVCGNCTKLKLDC). Disordered stretches follow at residues 95-150 (KKDI…VIPP) and 236-342 (TTVP…ANPL). 3 stretches are compositionally biased toward polar residues: residues 113–143 (STVS…QDIK), 252–306 (RKSQ…SGSP), and 326–337 (KSLPNISPNMSI).

Its subcellular location is the nucleus. Functionally, transcription factor involved in the regulation of ergosterol biosynthetic genes such as ERG2 and ERG11 through direct binding to sterol response elements (SREs) in the promoters. Also binds to its own promoter on 2 cis-acting elements to promote autoregulation. Regulates sterol uptake across the plasma membrane. Acts as a major regulator of ascorbic acid-induced response. Plays a role in the triggering of pyroptosis, an inflammasome-mediated programmed cell death pathway in macrophages, allowing macrophages escaping. The polypeptide is Sterol uptake control protein 2 (Candida albicans (strain SC5314 / ATCC MYA-2876) (Yeast)).